A 74-amino-acid chain; its full sequence is Small ribosomal subunit protein bS18 (74 aa).

It belongs to the bacterial ribosomal protein bS18 family. Part of the 30S ribosomal subunit. Forms a tight heterodimer with protein bS6.

Its function is as follows. Binds as a heterodimer with protein bS6 to the central domain of the 16S rRNA, where it helps stabilize the platform of the 30S subunit. This Coprothermobacter proteolyticus (strain ATCC 35245 / DSM 5265 / OCM 4 / BT) protein is Small ribosomal subunit protein bS18.